The chain runs to 135 residues: Bacilliredoxin CHU_0972 (135 aa).

This sequence belongs to the bacilliredoxin family.

The sequence is that of Bacilliredoxin CHU_0972 from Cytophaga hutchinsonii (strain ATCC 33406 / DSM 1761 / CIP 103989 / NBRC 15051 / NCIMB 9469 / D465).